The sequence spans 293 residues: Non-structural protein NS-S (293 aa).

Positions 21–29 are essential for inhibition of IFN-beta activation and interaction with host TBK1; that stretch reads VRLEPSLGE. Residues 66–69 form an involved in inclusion bodies formation region; it reads PKNP. The segment at 148–220 is interaction with host TNIP2; the sequence is FEGDMILDSL…KPLLDCWDFF (73 aa).

It belongs to the Bandavirus NS-S protein family. As to quaternary structure, interacts with the host E3 ubiquitin ligase TRIM25; this interaction sequesters TRIM25 in NSs-induced cytoplasmic inclusion bodies. Interacts with the host E3 ubiquitin ligase RIGI; this interaction sequesters RIGI in NSs-induced cytoplasmic inclusion bodies. Interacts with the host E3 ubiquitin ligase TBK1 (via N-terminus); this interaction sequesters TBK1 in NSs-induced cytoplasmic inclusion bodies and inhibits TBK1 phosphorylation. NSs does not interact with IKBKE/IKKE or IRF3. Interacts with host IRF7; this interaction sequesters IRF7 in NSs-induced cytoplasmic inclusion bodies. Interacts with host SYNGR2; this interaction is essential to promoting the formation of the inclusion bodies to become virus factories for viral RNA replication through its interaction with NSs. Interacts with host STAT2; this interaction sequesters STAT2 in NSs-induced cytoplasmic inclusion bodies. Interacts with host TNIP2; this interaction promotes TPL2 complex formation and signaling activity leading to IL-10 production. Interacts with host TRIM21 (via B30.2/SPRY domain); this interaction activates host NFE2L2-mediated transcriptional activation of antioxidant genes. Interacts with host CDK1; this interaction is inclusion body dependent, it inhibits the formation and nuclear import of the cyclin B1-CDK1 complex and leads to host cell cycle arrest.

The protein resides in the host cytoplasm. Its subcellular location is the host cytoplasmic vesicle. Sequesters host STAT2 into viral inclusion bodies. Impairs IFN-stimulated phosphorylation and nuclear translocation of host STAT2, thereby suppressing type-I IFN antiviral signaling. Sequesters host TRIM25, RIGI, TBK1/IKK complex components (TBK1, IKBKE/IKKE, and IRF3) and IRF7 into viral inclusion bodies, thereby inhibiting the IFN responses. Inhibits TRIM25-mediated ubiquitination of the RIGI. The sequestration of IKBKE/IKKE, and IRF3 occurs via the interaction with TBK1. Sequestration and inhibition of host TBK1 probably participates to the cytokine storm induced by the virus. Also inhibits the phosphorylation of host TBK1. Interacts with host TNIP2 and promotes TPL2-TNIP2-p105 complex formation leading to IL-10 induction. By interacting with CDK1, induces host cell arrest at the G2/M transition to promote viral replication. Requested for the formation of the viral cytoplasmic inclusion bodies. The polypeptide is Non-structural protein NS-S (NSS) (SFTS phlebovirus (isolate SFTSV/Human/China/HB29/2010) (Severe fever with thrombocytopenia virus)).